The primary structure comprises 275 residues: Urease accessory protein UreD (275 aa).

Belongs to the UreD family. In terms of assembly, ureD, UreF and UreG form a complex that acts as a GTP-hydrolysis-dependent molecular chaperone, activating the urease apoprotein by helping to assemble the nickel containing metallocenter of UreC. The UreE protein probably delivers the nickel.

It is found in the cytoplasm. Its function is as follows. Required for maturation of urease via the functional incorporation of the urease nickel metallocenter. The sequence is that of Urease accessory protein UreD from Cereibacter sphaeroides (strain ATCC 17025 / ATH 2.4.3) (Rhodobacter sphaeroides).